The following is a 265-amino-acid chain: Short-chain dehydrogenase/reductase GME11373 (265 aa).

Residues Ile26, Asp72, Asn99, and Arg132 each contribute to the NADP(+) site. Active-site proton donor residues include Ser148 and Ser149. Residues Tyr163, Lys167, and Thr198 each coordinate NADP(+). The active-site Proton acceptor is Tyr163. Lys167 functions as the Lowers pKa of active site Tyr in the catalytic mechanism.

This sequence belongs to the short-chain dehydrogenases/reductases (SDR) family.

The protein operates within secondary metabolite biosynthesis. Functionally, short-chain dehydrogenase/reductase; part of the gene cluster that mediates the biosynthesis of dibenzodioxocinones such as pestalotiollide B, a novel class of inhibitors against cholesterol ester transfer protein (CEPT). The biosynthesis initiates from condensation of acetate and malonate units catalyzed by the non-reducing PKS pks8/GME11356. Pks8/GME11356 lacks a thioesterase (TE) domain, which is important to the cyclizing of the third ring of atrochrysone carboxylic acid, and the esterase GME11355 might play the role of TE and catalyzes the cyclization reaction of the C ring. The lactamase-like protein GME11357 (or other beta-lactamases in Pestalotiopsis microspora) probably hydrolyzes the thioester bond between the ACP of pks8/GME11356 and the intermediate to release atrochrysone carboxylic acid, which is spontaneously dehydrates to form endocrocin anthrone. Endocrocin anthrone is further converted to emodin via the endocrocin intermediate. Emodin is then oxidized by several enzymes such as the Baeyer-Villiger oxidase GME11358, the oxidoreductase GME11367, the short chain dehydrogenase/reductase GME11373, as well as by other oxidoreductases from the cluster, to modify the A and C rings and open the B ring, and finally yield monodictyphenone. The prenyltransferase GME11375 may catalyze the addition reaction between the C5 side chains and the carbon bone of dibenzodioxocinones. The remaining biochemical reactions to the final product dibenzodioxocinones should be methylation catalyzed by methyltransferase GME11366 and reduction and lactonization reaction catalyzed by a series of oxidordeuctases. The polypeptide is Short-chain dehydrogenase/reductase GME11373 (Pestalotiopsis microspora).